The primary structure comprises 1036 residues: Ephrin type-A receptor 6 (1036 aa).

Positions 1–22 (MGGCEVREFLLQFGFFLPLLTA) are cleaved as a signal peptide. Over 23–550 (WPGDCSHVSN…MAAEQGQILV (528 aa)) the chain is Extracellular. The region spanning 34-212 (QVVLLDTTTV…FYKKCPFTVR (179 aa)) is the Eph LBD domain. 2 Fibronectin type-III domains span residues 331 to 441 (PPSA…TDQD) and 442 to 537 (APSL…TGDE). Asn343, Asn397, and Asn410 each carry an N-linked (GlcNAc...) asparagine glycan. A helical membrane pass occupies residues 551-571 (IATAAVGGFTLLVILTLFFLI). Over 572-1036 (TGRCQWYIKA…MHIQEKGFHV (465 aa)) the chain is Cytoplasmic. Phosphotyrosine; by autocatalysis occurs at positions 606 and 612. One can recognise a Protein kinase domain in the interval 631-944 (IRIERVIGAG…RNPSALHTLV (314 aa)). ATP is bound by residues 637–645 (IGAGEFGEV) and Lys663. Asp798 acts as the Proton acceptor in catalysis. 2 positions are modified to phosphotyrosine; by autocatalysis: Tyr831 and Tyr978. Residues 961–1025 (PLFVTVGDWL…VSSIQTLRLH (65 aa)) form the SAM domain. Residues 1034-1036 (FHV) carry the PDZ-binding motif.

This sequence belongs to the protein kinase superfamily. Tyr protein kinase family. Ephrin receptor subfamily. In terms of assembly, heterotetramer upon binding of the ligand. The heterotetramer is composed of an ephrin dimer and a receptor dimer. Oligomerization is probably required to induce biological responses. Interacts (via SAM domain) with ANKS1A (via SAM domain). In terms of tissue distribution, expressed in brain and testis.

It localises to the membrane. The catalysed reaction is L-tyrosyl-[protein] + ATP = O-phospho-L-tyrosyl-[protein] + ADP + H(+). Receptor tyrosine kinase which binds promiscuously GPI-anchored ephrin-A family ligands residing on adjacent cells, leading to contact-dependent bidirectional signaling into neighboring cells. The signaling pathway downstream of the receptor is referred to as forward signaling while the signaling pathway downstream of the ephrin ligand is referred to as reverse signaling. The protein is Ephrin type-A receptor 6 (EPHA6) of Homo sapiens (Human).